The following is a 180-amino-acid chain: uncharacterized protein (180 aa).

The segment at 138 to 180 (SVMPVPMPQQNSDNGSTPHIVDSSKSKDKSSNDGDNGVFTGDE) is disordered. Residues 145 to 154 (PQQNSDNGST) show a composition bias toward polar residues. Residues 159 to 169 (DSSKSKDKSSN) are compositionally biased toward basic and acidic residues.

This is an uncharacterized protein from Acidianus filamentous virus 2 (isolate Italy/Pozzuoli) (AFV-2).